A 209-amino-acid polypeptide reads, in one-letter code: Methylated-DNA--protein-cysteine methyltransferase (209 aa).

Residue Cys5 participates in Zn(2+) binding. Ser14 is subject to Phosphoserine. Zn(2+) is bound by residues Cys24, His29, and His89. DNA contacts are provided by Thr99, Tyr118, Gln119, Asn127, and Arg132. Cys149 serves as the catalytic Nucleophile; methyl group acceptor. Ser155 lines the DNA pocket.

This sequence belongs to the MGMT family. Zn(2+) is required as a cofactor.

The protein resides in the nucleus. The catalysed reaction is a 6-O-methyl-2'-deoxyguanosine in DNA + L-cysteinyl-[protein] = S-methyl-L-cysteinyl-[protein] + a 2'-deoxyguanosine in DNA. It catalyses the reaction a 4-O-methyl-thymidine in DNA + L-cysteinyl-[protein] = a thymidine in DNA + S-methyl-L-cysteinyl-[protein]. In terms of biological role, involved in the cellular defense against the biological effects of O6-methylguanine (O6-MeG) and O4-methylthymine (O4-MeT) in DNA. Repairs the methylated nucleobase in DNA by stoichiometrically transferring the methyl group to a cysteine residue in the enzyme. This is a suicide reaction: the enzyme is irreversibly inactivated. This Rattus norvegicus (Rat) protein is Methylated-DNA--protein-cysteine methyltransferase (Mgmt).